We begin with the raw amino-acid sequence, 673 residues long: Poly(glycerol-phosphate) alpha-glucosyltransferase (673 aa).

Phosphoserine is present on S2.

Belongs to the glycosyltransferase group 1 family. Glycosyltransferase 4 subfamily.

Its subcellular location is the cytoplasm. It carries out the reaction 4-O-{[(2R)-1-glycerylphospho](n)-(2R)-1-glycerylphospho}-N-acetyl-beta-D-mannosaminyl-(1-&gt;4)-N-acetyl-alpha-D-glucosaminyl undecaprenyl diphosphate + n UDP-alpha-D-glucose = 4-O-{[(2R)-2-alpha-D-glucosyl-1-glycerylphospho](n)-(2R)-1-glycerylphospho}-N-acetyl-beta-D-mannosaminyl-(1-&gt;4)-N-acetyl-alpha-D-glucosaminyl undecaprenyl diphosphate + n UDP + n H(+). It participates in cell wall biogenesis; poly(glycerol phosphate) teichoic acid biosynthesis. Catalyzes the addition of glucose to the C-2 hydroxy group of the glycerol units in teichoic acid. This is Poly(glycerol-phosphate) alpha-glucosyltransferase (tagE) from Bacillus subtilis (strain 168).